The chain runs to 297 residues: Acetyl-coenzyme A carboxylase carboxyl transferase subunit beta (297 aa).

The 270-residue stretch at 27 to 296 (LWHKCPSCEA…PEAAKEVAAV (270 aa)) folds into the CoA carboxyltransferase N-terminal domain. Residues Cys31, Cys34, Cys50, and Cys53 each contribute to the Zn(2+) site. The C4-type zinc finger occupies 31 to 53 (CPSCEAVLYRPELEKTLDVCPKC).

It belongs to the AccD/PCCB family. As to quaternary structure, acetyl-CoA carboxylase is a heterohexamer composed of biotin carboxyl carrier protein (AccB), biotin carboxylase (AccC) and two subunits each of ACCase subunit alpha (AccA) and ACCase subunit beta (AccD). Zn(2+) serves as cofactor.

The protein resides in the cytoplasm. The enzyme catalyses N(6)-carboxybiotinyl-L-lysyl-[protein] + acetyl-CoA = N(6)-biotinyl-L-lysyl-[protein] + malonyl-CoA. The protein operates within lipid metabolism; malonyl-CoA biosynthesis; malonyl-CoA from acetyl-CoA: step 1/1. Its function is as follows. Component of the acetyl coenzyme A carboxylase (ACC) complex. Biotin carboxylase (BC) catalyzes the carboxylation of biotin on its carrier protein (BCCP) and then the CO(2) group is transferred by the transcarboxylase to acetyl-CoA to form malonyl-CoA. The protein is Acetyl-coenzyme A carboxylase carboxyl transferase subunit beta of Pseudomonas entomophila (strain L48).